A 200-amino-acid polypeptide reads, in one-letter code: H-2 class I histocompatibility antigen, Q9 alpha chain (200 aa).

The signal sequence occupies residues 1-21 (MALTMLLLLVAAALTLIETRA). Residues 22-111 (GQHSLQYFHT…AQSYYNQSKG (90 aa)) are alpha-1. At 22–200 (GQHSLQYFHT…RYLELGKETL (179 aa)) the chain is on the extracellular side. N107 is a glycosylation site (N-linked (GlcNAc...) asparagine). Residues 112-200 (GSHTLQWMYG…RYLELGKETL (89 aa)) form an alpha-2 region. An intrachain disulfide couples C122 to C185.

The protein belongs to the MHC class I family. In terms of assembly, heterodimer of an alpha chain and a beta chain (beta-2-microglobulin).

The protein localises to the membrane. Involved in the presentation of foreign antigens to the immune system. The polypeptide is H-2 class I histocompatibility antigen, Q9 alpha chain (H2-Q9) (Mus musculus (Mouse)).